The chain runs to 154 residues: Neurotrophin-3 (154 aa).

The N-terminal stretch at 1–18 (MSILFYVMFLAYLRGVQG) is a signal peptide. The propeptide occupies 19-134 (NSMDQRSLPE…VNSRSPRRKR (116 aa)).

This sequence belongs to the NGF-beta family.

The protein resides in the secreted. Seems to promote the survival of visceral and proprioceptive sensory neurons. In Cervus elaphus (Red deer), this protein is Neurotrophin-3 (NTF3).